A 131-amino-acid chain; its full sequence is Glycine cleavage system H protein (131 aa).

The Lipoyl-binding domain maps to 24-106 (RVTVGISDHA…YGEGWIFVVE (83 aa)). Lysine 65 is subject to N6-lipoyllysine.

It belongs to the GcvH family. The glycine cleavage system is composed of four proteins: P, T, L and H. (R)-lipoate is required as a cofactor.

Its function is as follows. The glycine cleavage system catalyzes the degradation of glycine. The H protein shuttles the methylamine group of glycine from the P protein to the T protein. The polypeptide is Glycine cleavage system H protein (Xanthomonas axonopodis pv. citri (strain 306)).